The following is a 180-amino-acid chain: N-terminal acetyltransferase B complex catalytic subunit naa20 (180 aa).

Positions 2–156 (TDTRKFKATD…DSFDMRKPLS (155 aa)) constitute an N-acetyltransferase domain.

This sequence belongs to the acetyltransferase family. As to quaternary structure, component of the N-terminal acetyltransferase B (NatB) complex.

Its subcellular location is the cytoplasm. It is found in the nucleus. It carries out the reaction N-terminal L-methionyl-L-asparaginyl-[protein] + acetyl-CoA = N-terminal N(alpha)-acetyl-L-methionyl-L-asparaginyl-[protein] + CoA + H(+). The catalysed reaction is N-terminal L-methionyl-L-glutaminyl-[protein] + acetyl-CoA = N-terminal N(alpha)-acetyl-L-methionyl-L-glutaminyl-[protein] + CoA + H(+). It catalyses the reaction N-terminal L-methionyl-L-aspartyl-[protein] + acetyl-CoA = N-terminal N(alpha)-acetyl-L-methionyl-L-aspartyl-[protein] + CoA + H(+). The enzyme catalyses N-terminal L-methionyl-L-glutamyl-[protein] + acetyl-CoA = N-terminal N(alpha)-acetyl-L-methionyl-L-glutamyl-[protein] + CoA + H(+). Its function is as follows. Catalytic subunit of the NatB N-terminal acetyltransferase, which catalyzes acetylation of the amino-terminal methionine residues of all proteins beginning with Met-Asp or Met-Glu and of some proteins beginning with Met-Asn, Met-Gln or Met-Met. The protein is N-terminal acetyltransferase B complex catalytic subunit naa20 (naa20) of Schizosaccharomyces pombe (strain 972 / ATCC 24843) (Fission yeast).